The chain runs to 289 residues: Geranylgeranyl diphosphate synthase (289 aa).

2 residues coordinate isopentenyl diphosphate: Arg43 and His73. Asp80 and Asp86 together coordinate Mg(2+). A (2E,6E)-farnesyl diphosphate-binding site is contributed by Arg91. Residue Arg92 coordinates isopentenyl diphosphate. Residues Lys170, Thr171, and Gln205 each contribute to the (2E,6E)-farnesyl diphosphate site.

It belongs to the FPP/GGPP synthase family. It depends on Mg(2+) as a cofactor.

The enzyme catalyses isopentenyl diphosphate + (2E,6E)-farnesyl diphosphate = (2E,6E,10E)-geranylgeranyl diphosphate + diphosphate. Its pathway is isoprenoid biosynthesis; geranylgeranyl diphosphate biosynthesis; geranylgeranyl diphosphate from farnesyl diphosphate and isopentenyl diphosphate: step 1/1. Its function is as follows. Catalyzes the condensation of farnesyl diphosphate (FPP) and isopentenyl diphosphate (IPP) to yield geranylgeranyl diphosphate (GGPP) needed for biosynthesis of carotenoids and diterpenes. The sequence is that of Geranylgeranyl diphosphate synthase (crtE) from Rhodobacter capsulatus (strain ATCC BAA-309 / NBRC 16581 / SB1003).